A 493-amino-acid polypeptide reads, in one-letter code: Isoniazid-induced protein IniC (493 aa).

In Mycobacterium tuberculosis (strain CDC 1551 / Oshkosh), this protein is Isoniazid-induced protein IniC (iniC).